A 142-amino-acid chain; its full sequence is Transcription antitermination protein NusB (142 aa).

This sequence belongs to the NusB family.

Involved in transcription antitermination. Required for transcription of ribosomal RNA (rRNA) genes. Binds specifically to the boxA antiterminator sequence of the ribosomal RNA (rrn) operons. This is Transcription antitermination protein NusB from Latilactobacillus sakei subsp. sakei (strain 23K) (Lactobacillus sakei subsp. sakei).